A 347-amino-acid chain; its full sequence is Queuosine 5'-phosphate N-glycosylase/hydrolase (347 aa).

Queuine contacts are provided by histidine 53, phenylalanine 237, aspartate 239, aspartate 321, and aspartate 326. The active-site Nucleophile or transition state stabilizer is aspartate 239.

It belongs to the QNG1 protein family.

The enzyme catalyses queuosine 5'-phosphate + H2O = queuine + D-ribose 5-phosphate. In terms of biological role, catalyzes the hydrolysis of queuosine 5'-phosphate, releasing the nucleobase queuine (q). Is required for salvage of queuine from exogenous queuosine (Q) that is imported and then converted to queuosine 5'-phosphate intracellularly. The sequence is that of Queuosine 5'-phosphate N-glycosylase/hydrolase from Nematostella vectensis (Starlet sea anemone).